The primary structure comprises 188 residues: Elongation factor P (188 aa).

It belongs to the elongation factor P family.

Its subcellular location is the cytoplasm. Its pathway is protein biosynthesis; polypeptide chain elongation. In terms of biological role, involved in peptide bond synthesis. Stimulates efficient translation and peptide-bond synthesis on native or reconstituted 70S ribosomes in vitro. Probably functions indirectly by altering the affinity of the ribosome for aminoacyl-tRNA, thus increasing their reactivity as acceptors for peptidyl transferase. The protein is Elongation factor P of Wolbachia pipientis subsp. Culex pipiens (strain wPip).